We begin with the raw amino-acid sequence, 650 residues long: DNA gyrase subunit B (650 aa).

The Toprim domain maps to 429 to 543 (NELFIVEGDS…AGYVYIAQPP (115 aa)). The Mg(2+) site is built by E435, D508, and D510.

This sequence belongs to the type II topoisomerase GyrB family. As to quaternary structure, heterotetramer, composed of two GyrA and two GyrB chains. In the heterotetramer, GyrA contains the active site tyrosine that forms a transient covalent intermediate with DNA, while GyrB binds cofactors and catalyzes ATP hydrolysis. Requires Mg(2+) as cofactor. The cofactor is Mn(2+). Ca(2+) serves as cofactor.

It is found in the cytoplasm. The catalysed reaction is ATP-dependent breakage, passage and rejoining of double-stranded DNA.. Its function is as follows. A type II topoisomerase that negatively supercoils closed circular double-stranded (ds) DNA in an ATP-dependent manner to modulate DNA topology and maintain chromosomes in an underwound state. Negative supercoiling favors strand separation, and DNA replication, transcription, recombination and repair, all of which involve strand separation. Also able to catalyze the interconversion of other topological isomers of dsDNA rings, including catenanes and knotted rings. Type II topoisomerases break and join 2 DNA strands simultaneously in an ATP-dependent manner. The polypeptide is DNA gyrase subunit B (Streptococcus pyogenes serotype M3 (strain ATCC BAA-595 / MGAS315)).